The following is a 432-amino-acid chain: Phosphomethylpyrimidine synthase (432 aa).

Residues Asn-66, Met-95, Tyr-124, His-163, 185-187 (SRG), 226-229 (DGLR), and Glu-265 each bind substrate. A Zn(2+)-binding site is contributed by His-269. Position 292 (Tyr-292) interacts with substrate. His-333 is a Zn(2+) binding site. [4Fe-4S] cluster is bound by residues Cys-409, Cys-412, and Cys-416.

The protein belongs to the ThiC family. [4Fe-4S] cluster serves as cofactor.

The enzyme catalyses 5-amino-1-(5-phospho-beta-D-ribosyl)imidazole + S-adenosyl-L-methionine = 4-amino-2-methyl-5-(phosphooxymethyl)pyrimidine + CO + 5'-deoxyadenosine + formate + L-methionine + 3 H(+). Its pathway is cofactor biosynthesis; thiamine diphosphate biosynthesis. Functionally, catalyzes the synthesis of the hydroxymethylpyrimidine phosphate (HMP-P) moiety of thiamine from aminoimidazole ribotide (AIR) in a radical S-adenosyl-L-methionine (SAM)-dependent reaction. This is Phosphomethylpyrimidine synthase from Desulforamulus reducens (strain ATCC BAA-1160 / DSM 100696 / MI-1) (Desulfotomaculum reducens).